Consider the following 466-residue polypeptide: Cysteine--tRNA ligase (466 aa).

Residue Cys-28 participates in Zn(2+) binding. The 'HIGH' region motif lies at 30–40 (PTVYNYIHIGN). Zn(2+) is bound by residues Cys-208, His-233, and Glu-237. The 'KMSKS' region signature appears at 265 to 269 (KMSKS). Lys-268 contributes to the ATP binding site.

The protein belongs to the class-I aminoacyl-tRNA synthetase family. Monomer. Requires Zn(2+) as cofactor.

It localises to the cytoplasm. It catalyses the reaction tRNA(Cys) + L-cysteine + ATP = L-cysteinyl-tRNA(Cys) + AMP + diphosphate. The sequence is that of Cysteine--tRNA ligase from Staphylococcus saprophyticus subsp. saprophyticus (strain ATCC 15305 / DSM 20229 / NCIMB 8711 / NCTC 7292 / S-41).